A 313-amino-acid polypeptide reads, in one-letter code: LUC7-related splicing factor homolog (313 aa).

A disordered region spans residues 237–313; that stretch reads RKEREEKLGS…RDRRDRDRRY (77 aa).

It belongs to the Luc7 family.

This chain is LUC7-related splicing factor homolog, found in Caenorhabditis elegans.